Reading from the N-terminus, the 373-residue chain is Muconate cycloisomerase 1 (373 aa).

K169 is an active-site residue. K169 acts as the Proton acceptor in catalysis. Positions 198, 224, and 249 each coordinate Mn(2+). E327 acts as the Proton donor in catalysis.

This sequence belongs to the mandelate racemase/muconate lactonizing enzyme family. Mn(2+) is required as a cofactor.

The enzyme catalyses (S)-muconolactone = cis,cis-muconate + H(+). In Rhodococcus opacus (Nocardia opaca), this protein is Muconate cycloisomerase 1 (catB).